The primary structure comprises 235 residues: Leucyl/phenylalanyl-tRNA--protein transferase (235 aa).

The protein belongs to the L/F-transferase family.

Its subcellular location is the cytoplasm. The catalysed reaction is N-terminal L-lysyl-[protein] + L-leucyl-tRNA(Leu) = N-terminal L-leucyl-L-lysyl-[protein] + tRNA(Leu) + H(+). It catalyses the reaction N-terminal L-arginyl-[protein] + L-leucyl-tRNA(Leu) = N-terminal L-leucyl-L-arginyl-[protein] + tRNA(Leu) + H(+). It carries out the reaction L-phenylalanyl-tRNA(Phe) + an N-terminal L-alpha-aminoacyl-[protein] = an N-terminal L-phenylalanyl-L-alpha-aminoacyl-[protein] + tRNA(Phe). Its function is as follows. Functions in the N-end rule pathway of protein degradation where it conjugates Leu, Phe and, less efficiently, Met from aminoacyl-tRNAs to the N-termini of proteins containing an N-terminal arginine or lysine. The polypeptide is Leucyl/phenylalanyl-tRNA--protein transferase (Cellvibrio japonicus (strain Ueda107) (Pseudomonas fluorescens subsp. cellulosa)).